The sequence spans 264 residues: Acetylglutamate kinase (264 aa).

Residues 40–41 (GG), R62, and N158 contribute to the substrate site.

It belongs to the acetylglutamate kinase family. ArgB subfamily.

The protein localises to the cytoplasm. The catalysed reaction is N-acetyl-L-glutamate + ATP = N-acetyl-L-glutamyl 5-phosphate + ADP. It functions in the pathway amino-acid biosynthesis; L-arginine biosynthesis; N(2)-acetyl-L-ornithine from L-glutamate: step 2/4. In terms of biological role, catalyzes the ATP-dependent phosphorylation of N-acetyl-L-glutamate. The sequence is that of Acetylglutamate kinase from Cytophaga hutchinsonii (strain ATCC 33406 / DSM 1761 / CIP 103989 / NBRC 15051 / NCIMB 9469 / D465).